The sequence spans 358 residues: 4-hydroxy-3-methylbut-2-en-1-yl diphosphate synthase (flavodoxin) (358 aa).

Cysteine 265, cysteine 268, cysteine 300, and glutamate 307 together coordinate [4Fe-4S] cluster.

The protein belongs to the IspG family. The cofactor is [4Fe-4S] cluster.

The catalysed reaction is (2E)-4-hydroxy-3-methylbut-2-enyl diphosphate + oxidized [flavodoxin] + H2O + 2 H(+) = 2-C-methyl-D-erythritol 2,4-cyclic diphosphate + reduced [flavodoxin]. Its pathway is isoprenoid biosynthesis; isopentenyl diphosphate biosynthesis via DXP pathway; isopentenyl diphosphate from 1-deoxy-D-xylulose 5-phosphate: step 5/6. In terms of biological role, converts 2C-methyl-D-erythritol 2,4-cyclodiphosphate (ME-2,4cPP) into 1-hydroxy-2-methyl-2-(E)-butenyl 4-diphosphate. The protein is 4-hydroxy-3-methylbut-2-en-1-yl diphosphate synthase (flavodoxin) of Maridesulfovibrio salexigens (strain ATCC 14822 / DSM 2638 / NCIMB 8403 / VKM B-1763) (Desulfovibrio salexigens).